A 247-amino-acid polypeptide reads, in one-letter code: Segregation and condensation protein A (247 aa).

The protein belongs to the ScpA family. In terms of assembly, component of a cohesin-like complex composed of ScpA, ScpB and the Smc homodimer, in which ScpA and ScpB bind to the head domain of Smc. The presence of the three proteins is required for the association of the complex with DNA.

It localises to the cytoplasm. Participates in chromosomal partition during cell division. May act via the formation of a condensin-like complex containing Smc and ScpB that pull DNA away from mid-cell into both cell halves. The polypeptide is Segregation and condensation protein A (Mycoplasma mobile (strain ATCC 43663 / 163K / NCTC 11711) (Mesomycoplasma mobile)).